The chain runs to 321 residues: Ribose-phosphate pyrophosphokinase (321 aa).

ATP-binding positions include 44-46 (DGE) and 103-104 (RQ). Positions 137 and 179 each coordinate Mg(2+). Lys-202 is an active-site residue. D-ribose 5-phosphate is bound by residues Arg-204, Asp-228, and 232 to 236 (DTAGT).

It belongs to the ribose-phosphate pyrophosphokinase family. Class I subfamily. As to quaternary structure, homohexamer. The cofactor is Mg(2+).

It localises to the cytoplasm. It carries out the reaction D-ribose 5-phosphate + ATP = 5-phospho-alpha-D-ribose 1-diphosphate + AMP + H(+). Its pathway is metabolic intermediate biosynthesis; 5-phospho-alpha-D-ribose 1-diphosphate biosynthesis; 5-phospho-alpha-D-ribose 1-diphosphate from D-ribose 5-phosphate (route I): step 1/1. Its function is as follows. Involved in the biosynthesis of the central metabolite phospho-alpha-D-ribosyl-1-pyrophosphate (PRPP) via the transfer of pyrophosphoryl group from ATP to 1-hydroxyl of ribose-5-phosphate (Rib-5-P). The chain is Ribose-phosphate pyrophosphokinase from Staphylococcus haemolyticus (strain JCSC1435).